The chain runs to 123 residues: Fluoride-specific ion channel FluC 1 (123 aa).

Transmembrane regions (helical) follow at residues 1–21 (MVDL…RYTL), 34–54 (PLAT…LYGF), 59–79 (VIWL…STYI), and 99–119 (LTSI…ANFF). Na(+)-binding residues include glycine 70 and threonine 73.

The protein belongs to the fluoride channel Fluc/FEX (TC 1.A.43) family.

Its subcellular location is the cell membrane. It catalyses the reaction fluoride(in) = fluoride(out). Its activity is regulated as follows. Na(+) is not transported, but it plays an essential structural role and its presence is essential for fluoride channel function. Functionally, fluoride-specific ion channel. Important for reducing fluoride concentration in the cell, thus reducing its toxicity. This Carboxydothermus hydrogenoformans (strain ATCC BAA-161 / DSM 6008 / Z-2901) protein is Fluoride-specific ion channel FluC 1.